The chain runs to 535 residues: RAN GTPase-activating protein 1 (535 aa).

The interval 1–115 is WPP; that stretch reads MDHSAKTTQN…EESEVEVSKD (115 aa). LRR repeat units lie at residues 208–231, 236–259, 264–287, 320–343, 353–376, 377–400, 405–428, 433–456, and 461–488; these read GSKL…AFAS, QHDL…AVRE, TDKI…AIAE, CSHL…ALAK, EIYM…LLKS, APSL…NLAA, KQSL…LIAK, HDQL…ALAQ, and KNTF…MFKD. A disordered region spans residues 493–535; sequence LVPLDDNDPEGEDFEDEDEEEEGEDGNELESKLGSLKIKQGEE. Positions 497-520 are enriched in acidic residues; it reads DDNDPEGEDFEDEDEEEEGEDGNE.

The protein belongs to the RNA1 family. As to quaternary structure, homodimer. Interacts with WIP1 through its WPP domain. Component of Ran complexes at least composed of WIT1 or WIT2, RANGAP1 or RANGAP2, and WIP1 or WIP2 or WIP3. Interacts directly with WIT1, WIP2 and WIP3. Interacts with POK1.

Its subcellular location is the cytoplasm. It is found in the nucleus envelope. It localises to the nucleus membrane. The protein localises to the cytoskeleton. The protein resides in the spindle. Its subcellular location is the phragmoplast. GTPase activator for the nuclear Ras-related regulatory protein Ran, converting it to the putatively inactive GDP-bound state. Plays a role in spatial signaling during cell division. This is RAN GTPase-activating protein 1 (RANGAP1) from Arabidopsis thaliana (Mouse-ear cress).